The following is an 809-amino-acid chain: Transitional endoplasmic reticulum ATPase homolog 1 (809 aa).

The disordered stretch occupies residues 1-21 (MASVPTHQSEKEKKNDELSTA). A compositionally biased stretch (basic and acidic residues) spans 8-21 (QSEKEKKNDELSTA). Residues 253 to 259 (PGTGKTL), asparagine 354, histidine 390, and 527 to 532 (GCGKTL) contribute to the ATP site. The segment at 779–809 (FGNNFKFPGEQRGSDAPSAPVPAQDDDDLYN) is disordered. Residues 803 to 809 (DDDDLYN) are interaction with ufd-2.

The protein belongs to the AAA ATPase family. CDC48 subfamily. As to quaternary structure, homohexamer; oligomerization is ATP-independent. Forms a ring-shaped particle of 18.3 nm diameter, that displays 6-fold radial symmetry. Interacts with cdc-48.2 and thus may form heterohexamers. Forms a complex composed of cdc-48.1, him-6 and crp-1; within the complex, interacts with helicase him-6 and GTPase crp-1. Forms a complex composed of deubiquitinating enzyme atx-3, adapter ubxn-5 and cdc-48.1; within the complex, interacts (via N-terminus) with ubxn-5 and with atx-3. Forms a complex composed of deubiquitinating enzyme atx-3, E4 ubiquitin-protein ligase ufd-2 and cdc-48.1; within the complex, interacts with atx-3 and (via DDDLYN motif) with ufd-2. Interacts (via N-terminus) with atx-3 (via RRDR motif); the interaction is not required for atx-3 enzymatic activity. Forms a complex composed of cdc-48.1, myosin chaperone unc-45, ubiquitin-protein ligases ufd-2 and chn-1; within the complex, interacts (via DDDLYN motif) with ufd-2 and targets myosin chaperone unc-45 for proteasomal degradation. Forms a complex composed of ubxn-3, ufd-1, npl-4.1 and cdc-48.1; within the complex, interacts (via N-terminus) with ubxn-3 (via FPK motif) and with ufd-1. Forms a complex composed of ubxn-3, cdc-48.1 and/or cdc-48.2 and substrate cdt-1. Interacts (via N-terminus) with ubxn-1. Interacts (via N-terminus) with ubxn-2. Interacts (via N-terminus) with ubxn-4. Interacts with ubxn-6. Interacts with ufd-3. Does not interact with air-2. Expressed in germ cells and spermatheca. Expressed in body wall muscles.

The protein localises to the cytoplasm. It localises to the perinuclear region. The catalysed reaction is ATP + H2O = ADP + phosphate + H(+). Its activity is regulated as follows. The first ATP-binding region has low ATPase activity. The second ATP-binding region is responsible for ATPase activity. ATP binding to the first ATP-binding region induces intrinsic activity of the second ATP-binding region. While ATP binding to the first ATP-binding region appears to prevent ATP hydrolysis by the second ATP-binding region, ADP-binding to first region promotes the coordinate and cooperative ATPase cycle of the second ATP-binding region. ATP binding to the first ATP-binding region induces a conformational change, promoting the rotation of the first ATP-binding region relative to the second ATP-binding region in the hexamer. Inhibited by N-ethylmaleimide (NEM). Its function is as follows. ATP-dependent chaperone which probably uses the energy provided by ATP hydrolysis to generate mechanical force to unfold substrate proteins, disassemble protein complexes, and disaggregate protein aggregates. Can also prevent aggregation of unfolded proteins also in an ATP-independent manner. Targets polyubiquitinated proteins for proteasomal degradation by binding to 'Lys-48'-linked polyubiquitin chains. Involved in the cytoplasmic elimination of misfolded proteins exported from the ER. This pathway, known as ERAD, prevents the activation of the unfolded protein response (UPR) caused by the accumulation of misfolded proteins in the ER. In association with helicase him-6 and GTPase crp-1, regulates the unfolded protein response (UPR) following ER stress, probably independently of the ERAD pathway. Together with udf-2 and chn-1, regulates myosin assembly in body wall muscles by targeting myosin chaperone unc-45 for proteasomal degradation. Together with the ufd-1-npl-4 complex, controls the switch from spermatogenesis to oogenesis by regulating E3 ligase cul-2 complex-mediated tra-1 proteasomal degradation. During oocyte meiosis and together with cdc-48.2, required for chromosome condensation at the diakinesis phase in prophase I and for progression of metaphase I. During the first embryonic cell division, regulates DNA replication and thus chromosome segregation and decondensation, and nuclear envelope re-assembly. In S phase and in association with ufd-1, npl-4.1 and/or npl-4.2 and ubxn-3, ensures the degradation of DNA licensing factor cdt-1 after the initiation of DNA replication and thus the disassembly of the DNA replication CMG helicase complex by promoting the dissociation from chromatin of several of its components including cdc-45 and sld-5. Regulates ubxn-3 nuclear localization during S phase. During the first embryonic cell divisions and together with cdc-48.2, regulates the re-assembly of the nuclear envelope after mitosis possibly by inactivating kinase air-2, a component of the chromosomal passenger complex (CPC). However, in another study, cdc-48.1 does not appear to be implicated in the regulation of air-2. The protein is Transitional endoplasmic reticulum ATPase homolog 1 of Caenorhabditis elegans.